A 292-amino-acid chain; its full sequence is tRNA-cytidine(32) 2-sulfurtransferase (292 aa).

The PP-loop motif motif lies at 53–58 (SGGKDS). Positions 128, 131, and 219 each coordinate [4Fe-4S] cluster.

The protein belongs to the TtcA family. As to quaternary structure, homodimer. Mg(2+) serves as cofactor. [4Fe-4S] cluster is required as a cofactor.

Its subcellular location is the cytoplasm. It carries out the reaction cytidine(32) in tRNA + S-sulfanyl-L-cysteinyl-[cysteine desulfurase] + AH2 + ATP = 2-thiocytidine(32) in tRNA + L-cysteinyl-[cysteine desulfurase] + A + AMP + diphosphate + H(+). It functions in the pathway tRNA modification. Its function is as follows. Catalyzes the ATP-dependent 2-thiolation of cytidine in position 32 of tRNA, to form 2-thiocytidine (s(2)C32). The sulfur atoms are provided by the cysteine/cysteine desulfurase (IscS) system. This is tRNA-cytidine(32) 2-sulfurtransferase from Cereibacter sphaeroides (strain ATCC 17023 / DSM 158 / JCM 6121 / CCUG 31486 / LMG 2827 / NBRC 12203 / NCIMB 8253 / ATH 2.4.1.) (Rhodobacter sphaeroides).